The following is a 481-amino-acid chain: RAC-beta serine/threonine-protein kinase (481 aa).

Position 1 is an N-acetylmethionine (Met1). Residues 5–108 (SVIKEGWLHK…WIRAIQMVAN (104 aa)) form the PH domain. Ser34 is subject to Phosphoserine. An intrachain disulfide couples Cys60 to Cys77. At Ser126 the chain carries Phosphoserine. Residues Ser128 and Ser131 are each glycosylated (O-linked (GlcNAc) serine). The 258-residue stretch at 152–409 (FDYLKLLGKG…AKEVMEHRFF (258 aa)) folds into the Protein kinase domain. ATP is bound by residues 158-166 (LGKGTFGKV) and Lys181. Asp275 serves as the catalytic Proton acceptor. Mn(2+) contacts are provided by Asn280 and Asp293. Thr306 is a glycosylation site (O-linked (GlcNAc) threonine). Phosphothreonine; by PDPK1 is present on Thr309. Thr313 carries an O-linked (GlcNAc) threonine glycan. The AGC-kinase C-terminal domain maps to 410-481 (LSINWQDVVQ…QFSYSASIRE (72 aa)). At Ser447 the chain carries Phosphoserine. Position 451 is a phosphothreonine (Thr451). Phosphoserine occurs at positions 461, 474, and 478. An O-linked (GlcNAc) serine; alternate glycan is attached at Ser474.

The protein belongs to the protein kinase superfamily. AGC Ser/Thr protein kinase family. RAC subfamily. Interacts with BTBD10. Interacts with KCTD20. Interacts (via PH domain) with MTCP1, TCL1A and TCL1B; this interaction may facilitate AKT2 oligomerization and phosphorylation, hence increasing kinase activity. Interacts with PHB2; this interaction may be important for myogenic differentiation. Interacts (when phosphorylated) with CLIP3; this interaction promotes cell membrane localization. Interacts with WDFY2 (via WD repeats 1-3). In terms of processing, phosphorylation on Thr-309 and Ser-474 is required for full activity. Phosphorylation of the activation loop at Thr-309 by PDPK1/PDK1 is a prerequisite for full activation. Phosphorylated and activated by PDPK1/PDK1 in the presence of phosphatidylinositol 3,4,5-trisphosphate. Phosphorylation by mTORC2 in response to growth factors plays a key role in AKT1 activation: mTORC2 phosphorylates different sites depending on the context, such as Ser-474 or Ser-478, thereby facilitating subsequent phosphorylation of the activation loop by PDPK1/PDK1. Post-translationally, ubiquitinated; undergoes both 'Lys-48'- and 'Lys-63'-linked polyubiquitination. TRAF6-induced 'Lys-63'-linked AKT2 ubiquitination. When fully phosphorylated and translocated into the nucleus, undergoes 'Lys-48'-polyubiquitination catalyzed by TTC3, leading to its degradation by the proteasome. O-GlcNAcylation at Thr-306 and Thr-313 inhibits activating phosphorylation at Thr-309 via disrupting the interaction between AKT and PDPK1/PDK1. As to expression, expressed in adipocytes and hepatocytes (at protein level). Expressed at low levels in skeletal muscle (at protein level).

Its subcellular location is the cytoplasm. The protein resides in the nucleus. The protein localises to the cell membrane. It is found in the early endosome. It carries out the reaction L-seryl-[protein] + ATP = O-phospho-L-seryl-[protein] + ADP + H(+). It catalyses the reaction L-threonyl-[protein] + ATP = O-phospho-L-threonyl-[protein] + ADP + H(+). With respect to regulation, phosphorylation at Thr-309 (in the kinase domain) and Ser-474 (in the C-terminal regulatory region) is required for full activation. In adipocytes and hepatocytes, the activation is induced by insulin. AKT2 phosphorylation of PKP1 is induced by insulin. Functionally, serine/threonine kinase closely related to AKT1 and AKT3. All 3 enzymes, AKT1, AKT2 and AKT3, are collectively known as AKT kinase. AKT regulates many processes including metabolism, proliferation, cell survival, growth and angiogenesis, through the phosphorylation of a range of downstream substrates. Over 100 substrates have been reported so far, although for most of them, the precise AKT kinase catalyzing the reaction was not specified. AKT regulates glucose uptake by mediating insulin-induced translocation of the SLC2A4/GLUT4 glucose transporter to the cell surface. Phosphorylation of PTPN1 at 'Ser-50' negatively modulates its phosphatase activity preventing dephosphorylation of the insulin receptor and the attenuation of insulin signaling. Phosphorylation of TBC1D4 triggers the binding of this effector to inhibitory 14-3-3 proteins, which is required for insulin-stimulated glucose transport. AKT also regulates the storage of glucose in the form of glycogen by phosphorylating GSK3A at 'Ser-21' and GSK3B at 'Ser-9', resulting in inhibition of its kinase activity. Phosphorylation of GSK3 isoforms by AKT is also thought to be one mechanism by which cell proliferation is driven. AKT also regulates cell survival via the phosphorylation of MAP3K5 (apoptosis signal-related kinase). Phosphorylation of 'Ser-83' decreases MAP3K5 kinase activity stimulated by oxidative stress and thereby prevents apoptosis. AKT mediates insulin-stimulated protein synthesis by phosphorylating TSC2 at 'Ser-939' and 'Thr-1462', thereby activating mTORC1 signaling and leading to both phosphorylation of 4E-BP1 and in activation of RPS6KB1. AKT is involved in the phosphorylation of members of the FOXO factors (Forkhead family of transcription factors), leading to binding of 14-3-3 proteins and cytoplasmic localization. In particular, FOXO1 is phosphorylated at 'Thr-24', 'Ser-256' and 'Ser-319'. FOXO3 and FOXO4 are phosphorylated on equivalent sites. AKT has an important role in the regulation of NF-kappa-B-dependent gene transcription and positively regulates the activity of CREB1 (cyclic AMP (cAMP)-response element binding protein). The phosphorylation of CREB1 induces the binding of accessory proteins that are necessary for the transcription of pro-survival genes such as BCL2 and MCL1. AKT phosphorylates 'Ser-454' on ATP citrate lyase (ACLY), thereby potentially regulating ACLY activity and fatty acid synthesis. Activates the 3B isoform of cyclic nucleotide phosphodiesterase (PDE3B) via phosphorylation of 'Ser-273', resulting in reduced cyclic AMP levels and inhibition of lipolysis. Phosphorylates PIKFYVE on 'Ser-318', which results in increased PI(3)P-5 activity. The Rho GTPase-activating protein DLC1 is another substrate and its phosphorylation is implicated in the regulation cell proliferation and cell growth. AKT plays a role as key modulator of the AKT-mTOR signaling pathway controlling the tempo of the process of newborn neurons integration during adult neurogenesis, including correct neuron positioning, dendritic development and synapse formation. Signals downstream of phosphatidylinositol 3-kinase (PI(3)K) to mediate the effects of various growth factors such as platelet-derived growth factor (PDGF), epidermal growth factor (EGF), insulin and insulin-like growth factor 1 (IGF1). AKT mediates the antiapoptotic effects of IGF1. Essential for the SPATA13-mediated regulation of cell migration and adhesion assembly and disassembly. May be involved in the regulation of the placental development. In response to lysophosphatidic acid stimulation, inhibits the ciliogenesis cascade. In this context, phosphorylates WDR44, hence stabilizing its interaction with Rab11 and preventing the formation of the ciliogenic Rab11-FIP3-RAB3IP complex. Also phosphorylates RAB3IP/Rabin8, thus may affect RAB3IP guanine nucleotide exchange factor (GEF) activity toward Rab8, which is important for cilia growth. Phosphorylates PKP1, facilitating its interaction with YWHAG and translocation to the nucleus, ultimately resulting in a reduction in keratinocyte intercellular adhesion. Phosphorylation of PKP1 increases PKP1 protein stability, translocation to the cytoplasm away from desmosome plaques and PKP1-driven cap-dependent translation. In terms of biological role, several AKT2-specific substrates have been identified, including ANKRD2, C2CD5, CLK2 and PITX2. May play a role in myoblast differentiation. In this context, may act through PITX2 phosphorylation. Unphosphorylated PITX2 associates with an ELAVL1/HuR-containing complex, which stabilizes cyclin mRNA and ensuring cell proliferation. Phosphorylation by AKT2 impairs this association, leading to CCND1 mRNA destabilization and progression towards differentiation. Also involved in the negative regulation of myogenesis in response to stress conditions. In this context, acts by phosphorylating ANKRD2. May also be a key regulator of glucose uptake. Regulates insulin-stimulated glucose transport by the increase of glucose transporter GLUT4 translocation from intracellular stores to the plasma membrane. In this context, acts by phosphorylating C2CD5/CDP138 on 'Ser-197' in insulin-stimulated adipocytes. Through the phosphorylation of CLK2 on 'Thr-343', involved in insulin-regulated suppression of hepatic gluconeogenesis. The chain is RAC-beta serine/threonine-protein kinase from Rattus norvegicus (Rat).